The sequence spans 290 residues: Syntaxin-2 (290 aa).

Residues 1-266 (MRDRLPDLTA…KYQSKARRKK (266 aa)) lie on the Cytoplasmic side of the membrane. Serine 14 bears the Phosphoserine mark. Positions 69-106 (EGKIKEELEDLNKEIKKTANRIRGKLKAIEQSCDQDEN) form a coiled coil. Residues 193–255 (LNEIESRHKD…EHAKEETKKA (63 aa)) enclose the t-SNARE coiled-coil homology domain. A helical; Anchor for type IV membrane protein transmembrane segment spans residues 267–290 (WIIAAVVVAVIAVLALIIGLTVGK).

The protein belongs to the syntaxin family. Interacts with SYT6 and SYT8; the interaction is Ca(2+)-dependent. Heart, spleen, liver, and testis.

Its subcellular location is the membrane. Essential for epithelial morphogenesis. May mediate Ca(2+)-regulation of exocytosis acrosomal reaction in sperm. The protein is Syntaxin-2 (Stx2) of Rattus norvegicus (Rat).